A 485-amino-acid chain; its full sequence is MATSLARMLKGQVRCYSAPLDMAIPASKQRYIPTTGTYPQGFQVSGTHVGVKASNTRFPDLALIASDTPCSAAAVFTTNKFQAAPVQVSRKTLQSRKGDGIRAVVINSGCANAVTGKGGLEDAVQMGRKVDECSGVENDSSLVMSTGVIGQRLPISKILDRIPTAHSTLASTHEAWLNTARAICTTDTFPKLLSRTFTLPSSPDRSYRLAGMTKGAGMIHPNMATLLGVLCTDAAVEPAALQSILKHAVSRSFNSISIDGDTSTNDTIAVLANGAAGGETVRAPGASASADYTALQGVVTDFAQELSQLVVRDGEGATKFVTVRVRNSPDYESGRMIASTIARSPLVKTALYGKDANWGRILCAVGYTQGVAEGTVVPERTSVSFRPVDGSEVLKLLVNGEPETVDEQRASVILQNEDLEIEVDLGGGEQGAAGCGGEDAVYWFCDFSHECIPAFAVDIIESREISGLKAFGSENAYIYEEEPLK.

Substrate is bound by residues T185, K214, T225, and E315. The Nucleophile role is filled by T225.

The protein belongs to the ArgJ family. As to quaternary structure, heterodimer of an alpha and a beta chain. The alpha and beta chains are autoproteolytically processed from a single precursor protein within the mitochondrion.

The protein resides in the mitochondrion matrix. The enzyme catalyses N(2)-acetyl-L-ornithine + L-glutamate = N-acetyl-L-glutamate + L-ornithine. It carries out the reaction L-glutamate + acetyl-CoA = N-acetyl-L-glutamate + CoA + H(+). It participates in amino-acid biosynthesis; L-arginine biosynthesis; L-ornithine and N-acetyl-L-glutamate from L-glutamate and N(2)-acetyl-L-ornithine (cyclic): step 1/1. It functions in the pathway amino-acid biosynthesis; L-arginine biosynthesis; N(2)-acetyl-L-ornithine from L-glutamate: step 1/4. Functionally, catalyzes two activities which are involved in the cyclic version of arginine biosynthesis: the synthesis of acetylglutamate from glutamate and acetyl-CoA, and of ornithine by transacetylation between acetylornithine and glutamate. The polypeptide is Arginine biosynthesis bifunctional protein ArgJ, mitochondrial (Penicillium rubens (strain ATCC 28089 / DSM 1075 / NRRL 1951 / Wisconsin 54-1255) (Penicillium chrysogenum)).